We begin with the raw amino-acid sequence, 116 residues long: MAGLLKKTTGLVGLAVCDTPHERLTILYTKTLDILKHFPKHAAYRKYTEQITNEKLDMVKAEPDVKKLEALLQGGEVEEVILQAEKELSLARKMLKWKPWEPLVEEPPANQWKWPI.

Residue Ala-2 is modified to N-acetylalanine. An N6-acetyllysine mark is found at Lys-30, Lys-36, Lys-46, and Lys-60. Ser-89 carries the post-translational modification Phosphoserine. Position 98 is an N6-acetyllysine; alternate (Lys-98). Lys-98 bears the N6-succinyllysine; alternate mark.

It belongs to the complex I NDUFA5 subunit family. In terms of assembly, complex I is composed of 45 different subunits. Post-translationally, acetylation of Lys-98 is observed in liver mitochondria from fasted mice but not from fed mice.

The protein localises to the mitochondrion inner membrane. In terms of biological role, accessory subunit of the mitochondrial membrane respiratory chain NADH dehydrogenase (Complex I), that is believed not to be involved in catalysis. Complex I functions in the transfer of electrons from NADH to the respiratory chain. The immediate electron acceptor for the enzyme is believed to be ubiquinone. The chain is NADH dehydrogenase [ubiquinone] 1 alpha subcomplex subunit 5 (Ndufa5) from Mus musculus (Mouse).